The following is a 491-amino-acid chain: Aspartyl/glutamyl-tRNA(Asn/Gln) amidotransferase subunit B (491 aa).

Belongs to the GatB/GatE family. GatB subfamily. In terms of assembly, heterotrimer of A, B and C subunits.

It carries out the reaction L-glutamyl-tRNA(Gln) + L-glutamine + ATP + H2O = L-glutaminyl-tRNA(Gln) + L-glutamate + ADP + phosphate + H(+). The catalysed reaction is L-aspartyl-tRNA(Asn) + L-glutamine + ATP + H2O = L-asparaginyl-tRNA(Asn) + L-glutamate + ADP + phosphate + 2 H(+). Allows the formation of correctly charged Asn-tRNA(Asn) or Gln-tRNA(Gln) through the transamidation of misacylated Asp-tRNA(Asn) or Glu-tRNA(Gln) in organisms which lack either or both of asparaginyl-tRNA or glutaminyl-tRNA synthetases. The reaction takes place in the presence of glutamine and ATP through an activated phospho-Asp-tRNA(Asn) or phospho-Glu-tRNA(Gln). The sequence is that of Aspartyl/glutamyl-tRNA(Asn/Gln) amidotransferase subunit B from Nostoc sp. (strain PCC 7120 / SAG 25.82 / UTEX 2576).